Here is a 179-residue protein sequence, read N- to C-terminus: Large ribosomal subunit protein uL5 (179 aa).

It belongs to the universal ribosomal protein uL5 family. Part of the 50S ribosomal subunit; part of the 5S rRNA/L5/L18/L25 subcomplex. Contacts the 5S rRNA and the P site tRNA. Forms a bridge to the 30S subunit in the 70S ribosome.

In terms of biological role, this is one of the proteins that bind and probably mediate the attachment of the 5S RNA into the large ribosomal subunit, where it forms part of the central protuberance. In the 70S ribosome it contacts protein S13 of the 30S subunit (bridge B1b), connecting the 2 subunits; this bridge is implicated in subunit movement. Contacts the P site tRNA; the 5S rRNA and some of its associated proteins might help stabilize positioning of ribosome-bound tRNAs. In Marinomonas sp. (strain MWYL1), this protein is Large ribosomal subunit protein uL5.